We begin with the raw amino-acid sequence, 386 residues long: MIRVRTSLKKCDVSLGLRLISTTRTNPTTPTTPRKRRATVFKDTLNKGPSFEDFVSGRAAEVSLDPLERARSTVEENQRLPKWLKTPIPKGSNFHKLKEDVRDLKLSTVCEEARCPNIGDCWGGNDKSKATATIMLLGDTCTRGCRFCSVKTNRKPGAPDPMEPENTAEAISRWGLGYVVLTTVDRDDLIDGGSHHLAETVRKIKQKAPNTLVETLAGDFRGDFQAVDVMAQSGLDVYAHNLETVESLTPHVRDRRATYRQSLNVLKRAKQTVPTLVTKTSLMLGLGETHEEVIQTLRDLREIKCDVVTFGQYMRPTKRHMKVVEYVTPEKFEFWKEQALEMGFLYCASGPLVRSSYKAGEAFIENVLRKRKPLEQQQESLSAFRI.

The [4Fe-4S] cluster site is built by C110, C115, C121, C141, C145, C148, and S356. Positions 124-345 (GNDKSKATAT…KEQALEMGFL (222 aa)) constitute a Radical SAM core domain.

This sequence belongs to the radical SAM superfamily. Lipoyl synthase family. [4Fe-4S] cluster is required as a cofactor.

The protein localises to the mitochondrion. The catalysed reaction is [[Fe-S] cluster scaffold protein carrying a second [4Fe-4S](2+) cluster] + N(6)-octanoyl-L-lysyl-[protein] + 2 oxidized [2Fe-2S]-[ferredoxin] + 2 S-adenosyl-L-methionine + 4 H(+) = [[Fe-S] cluster scaffold protein] + N(6)-[(R)-dihydrolipoyl]-L-lysyl-[protein] + 4 Fe(3+) + 2 hydrogen sulfide + 2 5'-deoxyadenosine + 2 L-methionine + 2 reduced [2Fe-2S]-[ferredoxin]. The protein operates within protein modification; protein lipoylation via endogenous pathway; protein N(6)-(lipoyl)lysine from octanoyl-[acyl-carrier-protein]: step 2/2. In terms of biological role, catalyzes the radical-mediated insertion of two sulfur atoms into the C-6 and C-8 positions of the octanoyl moiety bound to the lipoyl domains of lipoate-dependent enzymes, thereby converting the octanoylated domains into lipoylated derivatives. The polypeptide is Lipoyl synthase, mitochondrial (Zygosaccharomyces rouxii (strain ATCC 2623 / CBS 732 / NBRC 1130 / NCYC 568 / NRRL Y-229)).